Reading from the N-terminus, the 372-residue chain is Segmentation polarity homeobox protein engrailed (372 aa).

4 disordered regions span residues 1-35 (MAFE…YSPQ), 47-112 (YERG…LQPT), 196-246 (ERLS…QSNP), and 261-286 (DRPS…PRTA). 2 stretches are compositionally biased toward basic and acidic residues: residues 79-105 (DYYR…DRSR) and 197-215 (RLSR…KRPD). The span at 216-244 (SASSIVSSTSSGAVSTCGSSDASSIQSQS) shows a compositional bias: low complexity. The homeobox DNA-binding region spans 280-339 (EKRPRTAFSGAQLARLKHEFAENRYLTERRRQSLAAELGLAEAQIKIWFQNKRAKIKKAS).

It belongs to the engrailed homeobox family. As to expression, expressed in the middle silk gland but not in the posterior silk gland during the fourth molt/fifth intermolt period.

It is found in the nucleus. In terms of biological role, this protein might be involved in the compartmentalization of the silk gland. This chain is Segmentation polarity homeobox protein engrailed (en), found in Bombyx mori (Silk moth).